The sequence spans 97 residues: YcgL domain-containing protein APP7_0754 (97 aa).

In terms of domain architecture, YcgL spans 6–90; that stretch reads NLCAIYKSPK…PPENLLKTFL (85 aa).

The protein is YcgL domain-containing protein APP7_0754 of Actinobacillus pleuropneumoniae serotype 7 (strain AP76).